The sequence spans 329 residues: MNTEAKRIAVSGAAGQIAYSLLFRIAQGDLLGEDQPVILQLLDLPQAYGAVQGVVMELQDCAFPLLKEIQVATDPHAAFLNADYAFLVGSKPRTKGMERRDLLAENAAIFRTQGRALNEAASRDVKVLVVGNPANTNASILRRFAPDLPDDAISAMIRLDHNRAVSMLAQRCNVDVDSIADMVVWGNHSPTMFPDYRHARIGRRLVKDLINDENWYRESFIPKVAQRGTAIIEARGASSAASAANAAIDQMRDWIFGSDGRWVSMSVPSDGSYGIAPGLMFGVPVICDGGRYERVKDIGIDAFARQRIDLSVRELQEEADVVNRLFADR.

Gly-12–Ala-18 contributes to the NAD(+) binding site. 2 residues coordinate substrate: Arg-93 and Arg-99. NAD(+) is bound by residues Asn-106, Gln-113, and Val-130–Asn-132. Positions 132 and 163 each coordinate substrate. His-188 (proton acceptor) is an active-site residue.

Belongs to the LDH/MDH superfamily. MDH type 2 family.

The catalysed reaction is (S)-malate + NAD(+) = oxaloacetate + NADH + H(+). Its function is as follows. Catalyzes the reversible oxidation of malate to oxaloacetate. In Burkholderia thailandensis (strain ATCC 700388 / DSM 13276 / CCUG 48851 / CIP 106301 / E264), this protein is Malate dehydrogenase 2.